Here is a 279-residue protein sequence, read N- to C-terminus: Beta-porphyranase E (279 aa).

The signal sequence occupies residues 1–18; sequence MGNTMLLTLLLVVVAAYG. The GH16 domain maps to 19-277; that stretch reads QTPPPPEGFR…WVRSYTLLPV (259 aa). Substrate contacts are provided by W56, R60, E141, E146, and E243. E141 (nucleophile) is an active-site residue. The active-site Proton donor is the E146.

The protein belongs to the glycosyl hydrolase 16 family.

It localises to the periplasm. The catalysed reaction is Hydrolysis of beta-D-galactopyranose-(1-&gt;4)-alpha-L-galactopyranose-6-sulfate linkages in porphyran.. Functionally, cleaves the sulfated polysaccharide porphyran at the (1-&gt;4) linkages between beta-D-galactopyranose and alpha-L-galactopyranose-6-sulfate, forming mostly the disaccharide alpha-L-galactopyranose-6-sulfate-(1-&gt;3)-beta-D-galactose. The sequence is that of Beta-porphyranase E (porE) from Zobellia galactanivorans (strain DSM 12802 / CCUG 47099 / CIP 106680 / NCIMB 13871 / Dsij).